The sequence spans 387 residues: Eukaryotic translation initiation factor 3 subunit M (387 aa).

Residues 181 to 340 (RSSKVMIELL…RKVHISSTMH (160 aa)) enclose the PCI domain.

Belongs to the eIF-3 subunit M family. As to quaternary structure, component of the eukaryotic translation initiation factor 3 (eIF-3) complex. The eIF-3 complex interacts with pix.

The protein resides in the cytoplasm. The protein localises to the golgi apparatus. Component of the eukaryotic translation initiation factor 3 (eIF-3) complex, which is involved in protein synthesis of a specialized repertoire of mRNAs and, together with other initiation factors, stimulates binding of mRNA and methionyl-tRNAi to the 40S ribosome. The eIF-3 complex specifically targets and initiates translation of a subset of mRNAs involved in cell proliferation. This chain is Eukaryotic translation initiation factor 3 subunit M, found in Drosophila willistoni (Fruit fly).